A 775-amino-acid polypeptide reads, in one-letter code: Cation channel sperm-associated protein subunit epsilon-like protein (775 aa).

The signal sequence occupies residues 1-20 (MLARRVVAALLLWLSCCVSA). N-linked (GlcNAc...) asparagine glycans are attached at residues Asn62 and Asn114.

This sequence belongs to the CATSPERD family.

This is Cation channel sperm-associated protein subunit epsilon-like protein from Mus musculus (Mouse).